The following is a 294-amino-acid chain: Glyceraldehyde-3-phosphate dehydrogenase (294 aa).

NAD(+) contacts are provided by Asp19, Arg63, and Thr105. D-glyceraldehyde 3-phosphate is bound by residues 134 to 136 (SCT) and Thr165. The Nucleophile role is filled by Cys135. Lys177 carries the post-translational modification N6-acetyllysine. Residues 194–195 (TG) and Arg217 contribute to the D-glyceraldehyde 3-phosphate site. An N6-acetyllysine modification is found at Lys234.

This sequence belongs to the glyceraldehyde-3-phosphate dehydrogenase family. As to quaternary structure, homotetramer.

It localises to the cytoplasm. It catalyses the reaction D-glyceraldehyde 3-phosphate + phosphate + NAD(+) = (2R)-3-phospho-glyceroyl phosphate + NADH + H(+). It participates in carbohydrate degradation; glycolysis; pyruvate from D-glyceraldehyde 3-phosphate: step 1/5. Its function is as follows. Catalyzes the oxidative phosphorylation of glyceraldehyde 3-phosphate (G3P) to 1,3-bisphosphoglycerate (BPG) using the cofactor NAD. The first reaction step involves the formation of a hemiacetal intermediate between G3P and a cysteine residue, and this hemiacetal intermediate is then oxidized to a thioester, with concomitant reduction of NAD to NADH. The reduced NADH is then exchanged with the second NAD, and the thioester is attacked by a nucleophilic inorganic phosphate to produce BPG. This chain is Glyceraldehyde-3-phosphate dehydrogenase (gap), found in Pseudescherichia vulneris (Escherichia vulneris).